Here is a 412-residue protein sequence, read N- to C-terminus: Light-independent protochlorophyllide reductase subunit N (412 aa).

Positions 16, 41, and 102 each coordinate [4Fe-4S] cluster.

The protein belongs to the BchN/ChlN family. Protochlorophyllide reductase is composed of three subunits; ChlL, ChlN and ChlB. Forms a heterotetramer of two ChlB and two ChlN subunits. [4Fe-4S] cluster is required as a cofactor.

The catalysed reaction is chlorophyllide a + oxidized 2[4Fe-4S]-[ferredoxin] + 2 ADP + 2 phosphate = protochlorophyllide a + reduced 2[4Fe-4S]-[ferredoxin] + 2 ATP + 2 H2O. It functions in the pathway porphyrin-containing compound metabolism; chlorophyll biosynthesis (light-independent). Component of the dark-operative protochlorophyllide reductase (DPOR) that uses Mg-ATP and reduced ferredoxin to reduce ring D of protochlorophyllide (Pchlide) to form chlorophyllide a (Chlide). This reaction is light-independent. The NB-protein (ChlN-ChlB) is the catalytic component of the complex. The chain is Light-independent protochlorophyllide reductase subunit N from Synechococcus sp. (strain RCC307).